A 425-amino-acid chain; its full sequence is Glyco-Gag protein (425 aa).

Over 1-54 the chain is Cytoplasmic; that stretch reads MSRASSGTATGARLFGISSVLGEYRVLIGDEGAGPSRSPSEVSFSVWYRSRAAR. Residues 55–75 form a helical membrane-spanning segment; that stretch reads LVIVCLVASFLVPCLTFLIAE. The Extracellular segment spans residues 76–425; the sequence is TVMGQTITTP…VVQGKEETPA (350 aa). A glycan (N-linked (GlcNAc...) asparagine; by host) is linked at N137. Residues 174 to 285 form a disordered region; it reads VRPFLPPPKP…LREGPNNRPQ (112 aa). A compositionally biased stretch (pro residues) spans 177-196; that stretch reads FLPPPKPPTSLPQPLSPQPS. The segment covering 197–209 has biased composition (low complexity); sequence APLTSSLYPVLPK. 2 stretches are compositionally biased toward pro residues: residues 213-223 and 233-248; these read PKPPVLPPDPS and EPPP…PSGP.

In terms of processing, glycosylated by host. Cleaved by host near the middle of the molecule, releasing the c-terminal half containing capsid and nucleoprotein domains op GAG.

It is found in the host cell membrane. Its function is as follows. Plays a role in viral particle release. Presumably acts by facilitating the fission of the virion bud at the cell surface. This is Glyco-Gag protein from Felidae (cat family).